We begin with the raw amino-acid sequence, 192 residues long: Probable GTP-binding protein EngB (192 aa).

An EngB-type G domain is found at 22–192 (GRPEIVFVGR…LLERLDLFSQ (171 aa)). Residues 30–37 (GRSNVGKS), 57–61 (GKTRL), 75–78 (DLPG), 142–145 (TKWD), and 172–174 (YSS) contribute to the GTP site. 2 residues coordinate Mg(2+): Ser37 and Thr59.

Belongs to the TRAFAC class TrmE-Era-EngA-EngB-Septin-like GTPase superfamily. EngB GTPase family. Requires Mg(2+) as cofactor.

In terms of biological role, necessary for normal cell division and for the maintenance of normal septation. This chain is Probable GTP-binding protein EngB, found in Chlorobaculum parvum (strain DSM 263 / NCIMB 8327) (Chlorobium vibrioforme subsp. thiosulfatophilum).